A 370-amino-acid chain; its full sequence is 4-hydroxy-3-methylbut-2-en-1-yl diphosphate synthase (flavodoxin) (370 aa).

The [4Fe-4S] cluster site is built by cysteine 268, cysteine 271, cysteine 303, and glutamate 310.

Belongs to the IspG family. Requires [4Fe-4S] cluster as cofactor.

It catalyses the reaction (2E)-4-hydroxy-3-methylbut-2-enyl diphosphate + oxidized [flavodoxin] + H2O + 2 H(+) = 2-C-methyl-D-erythritol 2,4-cyclic diphosphate + reduced [flavodoxin]. The protein operates within isoprenoid biosynthesis; isopentenyl diphosphate biosynthesis via DXP pathway; isopentenyl diphosphate from 1-deoxy-D-xylulose 5-phosphate: step 5/6. Converts 2C-methyl-D-erythritol 2,4-cyclodiphosphate (ME-2,4cPP) into 1-hydroxy-2-methyl-2-(E)-butenyl 4-diphosphate. The sequence is that of 4-hydroxy-3-methylbut-2-en-1-yl diphosphate synthase (flavodoxin) from Bacillus cereus (strain B4264).